Consider the following 171-residue polypeptide: 3-hydroxydecanoyl-[acyl-carrier-protein] dehydratase (171 aa).

The active site involves H70.

This sequence belongs to the thioester dehydratase family. FabA subfamily. As to quaternary structure, homodimer.

The protein resides in the cytoplasm. It catalyses the reaction a (3R)-hydroxyacyl-[ACP] = a (2E)-enoyl-[ACP] + H2O. The enzyme catalyses (3R)-hydroxydecanoyl-[ACP] = (2E)-decenoyl-[ACP] + H2O. The catalysed reaction is (2E)-decenoyl-[ACP] = (3Z)-decenoyl-[ACP]. The protein operates within lipid metabolism; fatty acid biosynthesis. In terms of biological role, necessary for the introduction of cis unsaturation into fatty acids. Catalyzes the dehydration of (3R)-3-hydroxydecanoyl-ACP to E-(2)-decenoyl-ACP and then its isomerization to Z-(3)-decenoyl-ACP. Can catalyze the dehydratase reaction for beta-hydroxyacyl-ACPs with saturated chain lengths up to 16:0, being most active on intermediate chain length. The chain is 3-hydroxydecanoyl-[acyl-carrier-protein] dehydratase from Shewanella frigidimarina (strain NCIMB 400).